Reading from the N-terminus, the 416-residue chain is Enterobactin exporter EntS (416 aa).

Residues 1-21 lie on the Cytoplasmic side of the membrane; the sequence is MNKQSWLLNLSLLKTHPAFRA. A helical membrane pass occupies residues 22–42; sequence VFLARFISIVSLGLLGVAVPV. Residues 43–55 lie on the Periplasmic side of the membrane; the sequence is QIQMMTHSTWQVG. Residues 56-76 form a helical membrane-spanning segment; it reads LSVTLTGGAMFVGLMVGGVLA. The Cytoplasmic portion of the chain corresponds to 77-83; the sequence is DRYERKK. A helical membrane pass occupies residues 84–104; sequence VILLARGTCGIGFIGLCLNAL. At 105–109 the chain is on the periplasmic side; the sequence is LPEPS. A helical membrane pass occupies residues 110 to 130; that stretch reads LLAIYLLGLWDGFFASLGVTA. Residues 131 to 156 lie on the Cytoplasmic side of the membrane; sequence LLAATPALVGRENLMQAGALTMLTVR. A helical membrane pass occupies residues 157–177; sequence LGSVISPMIGGLLLATGGVAW. Position 178 (N178) is a topological domain, periplasmic. Residues 179-199 traverse the membrane as a helical segment; sequence YGLAAAGTFITLLPLLSLPAL. Topologically, residues 200–218 are cytoplasmic; the sequence is PPPPQPREHPLKSLLAGFR. The chain crosses the membrane as a helical span at residues 219-239; the sequence is FLLASPLVGGIALLGGLLTMA. The Periplasmic portion of the chain corresponds to 240-256; sequence SAVRVLYPALADNWQMS. The chain crosses the membrane as a helical span at residues 257–277; the sequence is AAEIGFLYAAIPLGAAIGALT. At 278–287 the chain is on the cytoplasmic side; sequence SGKLAHSARP. Residues 288 to 307 traverse the membrane as a helical segment; sequence GLLMLLSTLGSFLAIGLFGL. Topologically, residues 308 to 313 are periplasmic; the sequence is MPMWIL. The chain crosses the membrane as a helical span at residues 314–336; sequence GVVCLALFGWLSAVSSLLQYTML. Residues 337-356 are Cytoplasmic-facing; that stretch reads QTQTPEAMLGRINGLWTAQN. A helical transmembrane segment spans residues 357-377; that stretch reads VTGDAIGAALLGGLGAMMTPV. A378 is a topological domain (periplasmic). The chain crosses the membrane as a helical span at residues 379–399; the sequence is SASASGFGLLIIGVLLLLVLV. The Cytoplasmic segment spans residues 400 to 416; sequence ELRRFRQTPPQVTASDS.

This sequence belongs to the major facilitator superfamily. EntS (TC 2.A.1.38) family.

It is found in the cell inner membrane. Component of an export pathway for enterobactin. The protein is Enterobactin exporter EntS of Shigella boydii serotype 18 (strain CDC 3083-94 / BS512).